We begin with the raw amino-acid sequence, 101 residues long: Small ubiquitin-related modifier 1 (101 aa).

Positions 20–97 (EYIKLKVIGQ…IEVYQEQTGG (78 aa)) constitute a Ubiquitin-like domain. Gly-97 participates in a covalent cross-link: Glycyl lysine isopeptide (Gly-Lys) (interchain with K-? in acceptor proteins). The propeptide occupies 98-101 (HSTV).

The protein belongs to the ubiquitin family. SUMO subfamily. Interacts with SAE2, UBE2I, RANBP2, PIAS1 and PIAS2. Covalently attached to a number of proteins. Post-translationally, cleavage of precursor form by a sentrin-specific protease is necessary for function.

It is found in the nucleus membrane. It localises to the nucleus speckle. Its subcellular location is the cytoplasm. The protein resides in the nucleus. The protein localises to the PML body. It is found in the cell membrane. Ubiquitin-like protein that can be covalently attached to proteins as a monomer or a lysine-linked polymer. Covalent attachment via an isopeptide bond to its substrates requires prior activation by the E1 complex SAE1-SAE2 and linkage to the E2 enzyme UBE2I. This post-translational modification on lysine residues of proteins plays a crucial role in a number of cellular processes such as nuclear transport, DNA replication and repair, mitosis and signal transduction. Polymeric SUMO1 chains are also susceptible to polyubiquitination which functions as a signal for proteasomal degradation of modified proteins. The sequence is that of Small ubiquitin-related modifier 1 (SUMO1) from Gallus gallus (Chicken).